The sequence spans 620 residues: Coenzyme F420-dependent sulfite reductase (620 aa).

The 4Fe-4S ferredoxin-type 1 domain maps to 6-35 (LNEIVDSGVCARCGTCTIVCPNGILTFDER). [4Fe-4S] cluster is bound by residues C15, C18, C21, C25, C428, C434, C468, C472, C495, C498, C501, C505, C524, C527, C530, and C534. C472 lines the siroheme pocket. 4Fe-4S ferredoxin-type domains lie at 486–515 (KYPK…IRGE) and 520–544 (NYNV…VKEE).

The protein belongs to the nitrite and sulfite reductase 4Fe-4S domain family. Requires [4Fe-4S] cluster as cofactor. The cofactor is siroheme.

The enzyme catalyses 3 oxidized coenzyme F420-(gamma-L-Glu)(n) + hydrogen sulfide + 3 H2O + 2 H(+) = 3 reduced coenzyme F420-(gamma-L-Glu)(n) + sulfite. In terms of biological role, catalyzes the reduction of sulfite to sulfide using reduced F420 as the electron source. Involved in sulfite detoxification and assimilation. Cannot use NADH or NADPH. The sequence is that of Coenzyme F420-dependent sulfite reductase from Methanocaldococcus jannaschii (strain ATCC 43067 / DSM 2661 / JAL-1 / JCM 10045 / NBRC 100440) (Methanococcus jannaschii).